An 881-amino-acid polypeptide reads, in one-letter code: Heat shock protein 70 homolog LHS1 (881 aa).

Positions 1 to 20 (MRNVLRLLFLTAFVAIGSLA) are cleaved as a signal peptide. Residues Asn128, Asn458, Asn474, Asn481, Asn489, Asn527, and Asn844 are each glycosylated (N-linked (GlcNAc...) asparagine). Basic and acidic residues predominate over residues 833–844 (RKLEQEKSRNNN). The disordered stretch occupies residues 833–881 (RKLEQEKSRNNNETESTVINSADDKTTIVNDKTTESNPSSEEDILHDEL). Residues 859–871 (TIVNDKTTESNPS) show a composition bias toward polar residues. A compositionally biased stretch (acidic residues) spans 872–881 (SEEDILHDEL). A Prevents secretion from ER motif is present at residues 878–881 (HDEL).

It belongs to the heat shock protein 70 family. As to quaternary structure, interacts with the heat shock protein 70 (HSP70) KAR2, and this stimulates nucleotide exchange on KAR2. KAR2 in turn acts to stimulate the ATPase activity of LHS1. Post-translationally, N-glycosylated.

The protein localises to the endoplasmic reticulum lumen. The catalysed reaction is ATP + H2O = ADP + phosphate + H(+). Its function is as follows. Chaperone required for protein translocation and folding in the endoplasmic reticulum. This chain is Heat shock protein 70 homolog LHS1 (LHS1), found in Saccharomyces cerevisiae (strain ATCC 204508 / S288c) (Baker's yeast).